The following is a 144-amino-acid chain: NADH dehydrogenase [ubiquinone] 1 alpha subcomplex subunit 13 (144 aa).

Residues 30–51 (LSGYSMLAIGIGTLIYGHWSIM) traverse the membrane as a helical segment.

This sequence belongs to the complex I NDUFA13 subunit family. Complex I is composed of 45 different subunits. Interacts with CARD15, but not with CARD4. Interacts with STAT3, but not with STAT1, STAT2 and STAT5A. Interacts with OLFM4.

The protein resides in the mitochondrion inner membrane. The protein localises to the nucleus. Functionally, accessory subunit of the mitochondrial membrane respiratory chain NADH dehydrogenase (Complex I), that is believed not to be involved in catalysis. Complex I functions in the transfer of electrons from NADH to the respiratory chain. The immediate electron acceptor for the enzyme is believed to be ubiquinone. Involved in the interferon/all-trans-retinoic acid (IFN/RA) induced cell death. This apoptotic activity is inhibited by interaction with viral IRF1. Prevents the transactivation of STAT3 target genes. May play a role in CARD15-mediated innate mucosal responses and serve to regulate intestinal epithelial cell responses to microbes. The chain is NADH dehydrogenase [ubiquinone] 1 alpha subcomplex subunit 13 (NDUFA13) from Gorilla gorilla gorilla (Western lowland gorilla).